A 317-amino-acid chain; its full sequence is Adenine deaminase (317 aa).

3 residues coordinate Zn(2+): H14, H16, and H194. E197 (proton donor) is an active-site residue. D275 lines the Zn(2+) pocket. Residue D276 coordinates substrate.

Belongs to the metallo-dependent hydrolases superfamily. Adenosine and AMP deaminases family. Adenine deaminase type 2 subfamily. Zn(2+) is required as a cofactor.

The enzyme catalyses adenine + H2O + H(+) = hypoxanthine + NH4(+). Catalyzes the hydrolytic deamination of adenine to hypoxanthine. Plays an important role in the purine salvage pathway and in nitrogen catabolism. The sequence is that of Adenine deaminase from Pseudomonas fluorescens (strain Pf0-1).